Reading from the N-terminus, the 262-residue chain is Glucosamine-6-phosphate deaminase (262 aa).

Catalysis depends on aspartate 63, which acts as the Proton acceptor; for enolization step. Asparagine 129 acts as the For ring-opening step in catalysis. The Proton acceptor; for ring-opening step role is filled by histidine 131. Glutamate 136 acts as the For ring-opening step in catalysis.

This sequence belongs to the glucosamine/galactosamine-6-phosphate isomerase family. NagB subfamily.

The catalysed reaction is alpha-D-glucosamine 6-phosphate + H2O = beta-D-fructose 6-phosphate + NH4(+). Its pathway is amino-sugar metabolism; N-acetylneuraminate degradation; D-fructose 6-phosphate from N-acetylneuraminate: step 5/5. In terms of biological role, catalyzes the reversible isomerization-deamination of glucosamine 6-phosphate (GlcN6P) to form fructose 6-phosphate (Fru6P) and ammonium ion. The protein is Glucosamine-6-phosphate deaminase of Bacillus cereus (strain G9842).